Consider the following 198-residue polypeptide: Large ribosomal subunit protein bL25 (198 aa).

It belongs to the bacterial ribosomal protein bL25 family. CTC subfamily. In terms of assembly, part of the 50S ribosomal subunit; part of the 5S rRNA/L5/L18/L25 subcomplex. Contacts the 5S rRNA. Binds to the 5S rRNA independently of L5 and L18.

Its function is as follows. This is one of the proteins that binds to the 5S RNA in the ribosome where it forms part of the central protuberance. The sequence is that of Large ribosomal subunit protein bL25 from Pseudomonas putida (strain W619).